A 132-amino-acid polypeptide reads, in one-letter code: Amicyanin (132 aa).

The N-terminal stretch at 1–26 is a signal peptide; the sequence is MISAKTLRPAIAAIALFAIGATGAWA. The residue at position 27 (glutamine 27) is a Pyrrolidone carboxylic acid. The 106-residue stretch at 27 to 132 folds into the Plastocyanin-like domain; sequence QDKITVTSEK…PFMRGKVIVE (106 aa). Cu cation contacts are provided by histidine 80, cysteine 119, histidine 122, and methionine 125.

Requires Cu cation as cofactor.

The protein localises to the periplasm. It functions in the pathway one-carbon metabolism; methylamine degradation. In terms of biological role, primary acceptor of electrons from methylamine dehydrogenase. Passes those electrons on either a soluble cytochrome c or to pseudoazurin. The chain is Amicyanin (mauC) from Paracoccus versutus (Thiobacillus versutus).